A 96-amino-acid polypeptide reads, in one-letter code: Co-chaperonin GroES (96 aa).

Belongs to the GroES chaperonin family. Heptamer of 7 subunits arranged in a ring. Interacts with the chaperonin GroEL.

The protein resides in the cytoplasm. Functionally, together with the chaperonin GroEL, plays an essential role in assisting protein folding. The GroEL-GroES system forms a nano-cage that allows encapsulation of the non-native substrate proteins and provides a physical environment optimized to promote and accelerate protein folding. GroES binds to the apical surface of the GroEL ring, thereby capping the opening of the GroEL channel. The sequence is that of Co-chaperonin GroES from Aliivibrio fischeri (strain ATCC 700601 / ES114) (Vibrio fischeri).